Here is a 672-residue protein sequence, read N- to C-terminus: Acetoacetyl-CoA synthetase (672 aa).

Belongs to the ATP-dependent AMP-binding enzyme family.

It localises to the cytoplasm. It is found in the cytosol. It catalyses the reaction acetoacetate + ATP + CoA = acetoacetyl-CoA + AMP + diphosphate. Functionally, converts acetoacetate to acetoacetyl-CoA in the cytosol. Ketone body-utilizing enzyme, responsible for the synthesis of cholesterol and fatty acids. The protein is Acetoacetyl-CoA synthetase (AACS) of Macaca fascicularis (Crab-eating macaque).